A 216-amino-acid polypeptide reads, in one-letter code: Large ribosomal subunit protein uL3 (216 aa).

The segment at 137-158 (GASHGAHKNHRKPGSIGGASTP) is disordered.

This sequence belongs to the universal ribosomal protein uL3 family. Part of the 50S ribosomal subunit. Forms a cluster with proteins L14 and L19.

One of the primary rRNA binding proteins, it binds directly near the 3'-end of the 23S rRNA, where it nucleates assembly of the 50S subunit. In Arthrobacter sp. (strain FB24), this protein is Large ribosomal subunit protein uL3.